A 183-amino-acid polypeptide reads, in one-letter code: Adenine phosphoribosyltransferase (183 aa).

This sequence belongs to the purine/pyrimidine phosphoribosyltransferase family. Homodimer.

The protein localises to the cytoplasm. It catalyses the reaction AMP + diphosphate = 5-phospho-alpha-D-ribose 1-diphosphate + adenine. Its pathway is purine metabolism; AMP biosynthesis via salvage pathway; AMP from adenine: step 1/1. Its function is as follows. Catalyzes a salvage reaction resulting in the formation of AMP, that is energically less costly than de novo synthesis. In Shewanella sp. (strain ANA-3), this protein is Adenine phosphoribosyltransferase.